The following is a 213-amino-acid chain: PRA1 family protein B2 (213 aa).

Residues Met1–Pro21 are disordered. 5 consecutive transmembrane segments (helical) span residues Leu75–Leu94, Pro98–Phe117, Leu137–Leu157, Leu161–Phe181, and Ala190–Ala210.

This sequence belongs to the PRA1 family. As to quaternary structure, interacts with PRA1B1, PRA1B3, PRA1B4, PRA1B5, PRA1B6 and PRA1E.

The protein resides in the endosome membrane. Its function is as follows. May be involved in both secretory and endocytic intracellular trafficking in the endosomal/prevacuolar compartments. This Arabidopsis thaliana (Mouse-ear cress) protein is PRA1 family protein B2 (PRA1B2).